A 232-amino-acid polypeptide reads, in one-letter code: Urease accessory protein UreF (232 aa).

Belongs to the UreF family. UreD, UreF and UreG form a complex that acts as a GTP-hydrolysis-dependent molecular chaperone, activating the urease apoprotein by helping to assemble the nickel containing metallocenter of UreC. The UreE protein probably delivers the nickel.

It is found in the cytoplasm. Its function is as follows. Required for maturation of urease via the functional incorporation of the urease nickel metallocenter. The polypeptide is Urease accessory protein UreF (Azorhizobium caulinodans (strain ATCC 43989 / DSM 5975 / JCM 20966 / LMG 6465 / NBRC 14845 / NCIMB 13405 / ORS 571)).